We begin with the raw amino-acid sequence, 840 residues long: Cancer-associated gene 1 protein homolog (840 aa).

Residues 303 to 559 (MALNEILKKL…HVARSEEQNY (257 aa)) adopt a coiled-coil conformation. Positions 800–840 (EDLIRKPREKARKPRSKSLENHPKSMTMMPAVFKENRNDLD) are disordered. Positions 806–815 (PREKARKPRS) are enriched in basic residues.

The polypeptide is Cancer-associated gene 1 protein homolog (CAGE1) (Macaca fascicularis (Crab-eating macaque)).